The primary structure comprises 157 residues: tRNA (cytidine(34)-2'-O)-methyltransferase (157 aa).

The S-adenosyl-L-methionine site is built by leucine 78, glycine 100, isoleucine 122, and serine 130.

Belongs to the class IV-like SAM-binding methyltransferase superfamily. RNA methyltransferase TrmH family. TrmL subfamily. As to quaternary structure, homodimer.

The protein resides in the cytoplasm. It catalyses the reaction cytidine(34) in tRNA + S-adenosyl-L-methionine = 2'-O-methylcytidine(34) in tRNA + S-adenosyl-L-homocysteine + H(+). The catalysed reaction is 5-carboxymethylaminomethyluridine(34) in tRNA(Leu) + S-adenosyl-L-methionine = 5-carboxymethylaminomethyl-2'-O-methyluridine(34) in tRNA(Leu) + S-adenosyl-L-homocysteine + H(+). Its function is as follows. Methylates the ribose at the nucleotide 34 wobble position in the two leucyl isoacceptors tRNA(Leu)(CmAA) and tRNA(Leu)(cmnm5UmAA). Catalyzes the methyl transfer from S-adenosyl-L-methionine to the 2'-OH of the wobble nucleotide. This chain is tRNA (cytidine(34)-2'-O)-methyltransferase, found in Escherichia coli O6:H1 (strain CFT073 / ATCC 700928 / UPEC).